Consider the following 31-residue polypeptide: MSDIN-like toxin proprotein 4 (31 aa).

Residues 1–10 (MSDINGTRLP) constitute a propeptide that is removed on maturation. Positions 11 to 16 (WLATCP) form a cross-link, cyclopeptide (Trp-Pro). The propeptide occupies 17-31 (CVGEDVNPTLSRGER).

The protein belongs to the MSDIN fungal toxin family. Processed by the macrocyclase-peptidase enzyme POPB to yield a toxic cyclic hexapeptide. POPB first removes 10 residues from the N-terminus. Conformational trapping of the remaining peptide forces the enzyme to release this intermediate rather than proceed to macrocyclization. The enzyme rebinds the remaining peptide in a different conformation and catalyzes macrocyclization of the N-terminal 6 residues.

Its function is as follows. Probable toxin that belongs to the MSDIN-like toxin family responsible for a large number of food poisoning cases and deaths. This chain is MSDIN-like toxin proprotein 4, found in Amanita phalloides (Death cap).